Consider the following 165-residue polypeptide: Sporulation thiol-disulfide oxidoreductase A (165 aa).

Residues 1–26 form the signal peptide; it reads MLTKRLLTIYIMLLGLIAWFPGAAQA. The Thioredoxin domain maps to 27–165; the sequence is EEKQPAVPAV…AEQLKEWTEE (139 aa). A disulfide bond links cysteine 65 and cysteine 68.

This sequence belongs to the thioredoxin family.

The protein resides in the spore outer membrane. In terms of biological role, thiol-disulfide oxidoreductase with a reductive function, involved in spore cortex synthesis. It could be involved either in breaking disulfide bonds in cortex components or in proteins that are important for cortex synthesis, or in thiol/disulfide bond interchange. The polypeptide is Sporulation thiol-disulfide oxidoreductase A (stoA) (Bacillus subtilis (strain 168)).